An 80-amino-acid chain; its full sequence is Acyl carrier protein (80 aa).

Residues 3-78 (DDTFSRIQSI…QVLEYIEAES (76 aa)) form the Carrier domain. Position 38 is an O-(pantetheine 4'-phosphoryl)serine (Ser38).

Belongs to the acyl carrier protein (ACP) family. 4'-phosphopantetheine is transferred from CoA to a specific serine of apo-ACP by AcpS. This modification is essential for activity because fatty acids are bound in thioester linkage to the sulfhydryl of the prosthetic group.

It is found in the plastid. It localises to the chloroplast. Its pathway is lipid metabolism; fatty acid biosynthesis. Functionally, carrier of the growing fatty acid chain in fatty acid biosynthesis. The sequence is that of Acyl carrier protein from Trieres chinensis (Marine centric diatom).